Consider the following 155-residue polypeptide: Cell division protein SepF (155 aa).

A compositionally biased stretch (basic and acidic residues) spans 22 to 46 (RYVEEPEQRDERPALEKGRAPKEKQ). Residues 22–54 (RYVEEPEQRDERPALEKGRAPKEKQTAGMEQNQ) form a disordered region.

It belongs to the SepF family. Homodimer. Interacts with FtsZ.

Its subcellular location is the cytoplasm. Its function is as follows. Cell division protein that is part of the divisome complex and is recruited early to the Z-ring. Probably stimulates Z-ring formation, perhaps through the cross-linking of FtsZ protofilaments. Its function overlaps with FtsA. This chain is Cell division protein SepF, found in Shouchella clausii (strain KSM-K16) (Alkalihalobacillus clausii).